The chain runs to 444 residues: MFLNPVVPNGYYNLRGGAMQSKATPIREDGIYHSFCGLVSVGWLYQKIKDSFFLILGTHTCAHLLQNTLGVMIFARPRFAVSLLEESDLSSSQPDISAQIEEIKREHHPSVIFLLSSCTPEVMKVEFEGLAASVSTPEVPVLFVPASGLDYTFSQSEDSVLQALIPFCPPAPPDDKRVVFLGSVNDAIADDFSLEAARLGIPVAGFLPASHFTELPPIGPGTVIAPLQPYLHKTATQLRNERGCTVLSSLFPFGPDGTRRFWEDLAAQFGMQVDLSEREAAAWERIKHHTDLLRGKKIFFASDTLMELPLARFLKACGAEVVECSTPYINRRFHAAELAALDGVRLVEQANFHRQLRTITETKPDLIISNIITTNPLVGQGTVAKWGTEYCFLPIHGWAGVNNLVTSFTRALQRHARLDPLGSDPIWLTGMMPGSSGGVISLQS.

[4Fe-4S] cluster contacts are provided by cysteine 36, cysteine 61, and cysteine 118.

This sequence belongs to the BchN/ChlN family. In terms of assembly, protochlorophyllide reductase is composed of three subunits; BchL, BchN and BchB. Forms a heterotetramer of two BchB and two BchN subunits. [4Fe-4S] cluster serves as cofactor.

It carries out the reaction chlorophyllide a + oxidized 2[4Fe-4S]-[ferredoxin] + 2 ADP + 2 phosphate = protochlorophyllide a + reduced 2[4Fe-4S]-[ferredoxin] + 2 ATP + 2 H2O. The protein operates within porphyrin-containing compound metabolism; bacteriochlorophyll biosynthesis (light-independent). Its function is as follows. Component of the dark-operative protochlorophyllide reductase (DPOR) that uses Mg-ATP and reduced ferredoxin to reduce ring D of protochlorophyllide (Pchlide) to form chlorophyllide a (Chlide). This reaction is light-independent. The NB-protein (BchN-BchB) is the catalytic component of the complex. This Chloroflexus aurantiacus (strain ATCC 29366 / DSM 635 / J-10-fl) protein is Light-independent protochlorophyllide reductase subunit N.